A 143-amino-acid chain; its full sequence is Calcitonin (143 aa).

The N-terminal stretch at 1–25 (MGFGKSSPFLAFSILVLCQAGSLQA) is a signal peptide. Positions 26-84 (TPLRSALETLPDPGALSEKEGRLLLAALVKAYVQRKTNELEQEEEQEETEDSSLDSSRA) are excised as a propeptide. A Phosphoserine modification is found at S42. The tract at residues 62 to 86 (TNELEQEEEQEETEDSSLDSSRAKR) is disordered. The span at 65-78 (LEQEEEQEETEDSS) shows a compositional bias: acidic residues. A disulfide bond links C87 and C93. The disordered stretch occupies residues 112 to 143 (GFGPETPGKKRDIANSLEKDLSSHFGVPTDAN). Position 118 is a proline amide (P118). The span at 118–133 (PGKKRDIANSLEKDLS) shows a compositional bias: basic and acidic residues. A propeptide spanning residues 122–143 (RDIANSLEKDLSSHFGVPTDAN) is cleaved from the precursor.

It belongs to the calcitonin family.

The protein localises to the secreted. Calcitonin is a peptide hormone that causes a rapid but short-lived drop in the level of calcium and phosphate in blood by promoting the incorporation of those ions in the bones. Calcitonin function is mediated by the calcitonin receptor/CALCR and the CALCR-RAMP2 (AMYR2) receptor complex. This Ovis aries (Sheep) protein is Calcitonin (CALCA).